Here is a 132-residue protein sequence, read N- to C-terminus: MISAKTLRPAIAAIALFAIGATGAWAQDKITVTSEKPVAAADVPADAVVVGIEKMKYLTPEVTIKAGETVYWVNGEVMPHNVAFKKGIVGEDAFRGEMMTKDQAYAITFNEAGSYDYFCTPHPFMRGKVIVE.

An N-terminal signal peptide occupies residues 1 to 26 (MISAKTLRPAIAAIALFAIGATGAWA). Pyrrolidone carboxylic acid is present on Gln-27. Residues 27–132 (QDKITVTSEK…PFMRGKVIVE (106 aa)) form the Plastocyanin-like domain. His-80, Cys-119, His-122, and Met-125 together coordinate Cu cation.

Requires Cu cation as cofactor.

It localises to the periplasm. It functions in the pathway one-carbon metabolism; methylamine degradation. In terms of biological role, primary acceptor of electrons from methylamine dehydrogenase. Passes those electrons on either a soluble cytochrome c or to pseudoazurin. This is Amicyanin (mauC) from Paracoccus versutus (Thiobacillus versutus).